An 86-amino-acid chain; its full sequence is Toxin Tpa5 (86 aa).

The signal sequence occupies residues 1 to 20 (MSIFPIALALLLIGLEEGEA). The 64-residue stretch at 22 to 85 (RDGYPISKNN…WGDPGTPPCM (64 aa)) folds into the LCN-type CS-alpha/beta domain. Cystine bridges form between Cys33/Cys84, Cys37/Cys58, Cys43/Cys64, and Cys47/Cys66.

This sequence belongs to the long (4 C-C) scorpion toxin superfamily. Sodium channel inhibitor family. Beta subfamily. As to expression, expressed by the venom gland.

The protein localises to the secreted. Its function is as follows. Beta toxins bind voltage-independently at site-4 of sodium channels (Nav) and shift the voltage of activation toward more negative potentials thereby affecting sodium channel activation and promoting spontaneous and repetitive firing. The protein is Toxin Tpa5 of Tityus pachyurus (Colombian scorpion).